The chain runs to 652 residues: DNA ligase (652 aa).

NAD(+) is bound by residues 29-33 (DSEYD), 78-79 (SL), and E107. The N6-AMP-lysine intermediate role is filled by K109. R130, E164, K278, and K302 together coordinate NAD(+). C395, C398, C413, and C418 together coordinate Zn(2+). Residues 577-652 (AADAALSGMT…IRDEDWLDSL (76 aa)) form the BRCT domain.

Belongs to the NAD-dependent DNA ligase family. LigA subfamily. The cofactor is Mg(2+). Requires Mn(2+) as cofactor.

The enzyme catalyses NAD(+) + (deoxyribonucleotide)n-3'-hydroxyl + 5'-phospho-(deoxyribonucleotide)m = (deoxyribonucleotide)n+m + AMP + beta-nicotinamide D-nucleotide.. DNA ligase that catalyzes the formation of phosphodiester linkages between 5'-phosphoryl and 3'-hydroxyl groups in double-stranded DNA using NAD as a coenzyme and as the energy source for the reaction. It is essential for DNA replication and repair of damaged DNA. The protein is DNA ligase of Streptococcus sanguinis (strain SK36).